Consider the following 132-residue polypeptide: ATP synthase epsilon chain, cyanelle (132 aa).

Belongs to the ATPase epsilon chain family. As to quaternary structure, F-type ATPases have 2 components, CF(1) - the catalytic core - and CF(0) - the membrane proton channel. CF(1) has five subunits: alpha(3), beta(3), gamma(1), delta(1), epsilon(1). CF(0) has three main subunits: a, b and c.

The protein resides in the plastid. It is found in the cyanelle thylakoid membrane. In terms of biological role, produces ATP from ADP in the presence of a proton gradient across the membrane. The protein is ATP synthase epsilon chain, cyanelle of Cyanophora paradoxa.